The following is a 203-amino-acid chain: Nascent polypeptide-associated complex subunit alpha (203 aa).

Residues 1–19 (MADPRIEELPDEEVPKTNV) show a composition bias toward basic and acidic residues. A disordered region spans residues 1–45 (MADPRIEELPDEEVPKTNVEDAADSSESEAGEEPTIPGGAAVTIH). Residues 21-32 (DAADSSESEAGE) show a composition bias toward acidic residues. In terms of domain architecture, NAC-A/B spans 46-111 (SRNEKKARKA…AKIEDLNSQA (66 aa)). Positions 118 to 167 (QLAAAEAAGEHAGHDHDHDKGKGKAPETEAKKEEEEDDGEEVDETGLEPK) are disordered. Residues 125-150 (AGEHAGHDHDHDKGKGKAPETEAKKE) are compositionally biased toward basic and acidic residues. Positions 151-163 (EEEDDGEEVDETG) are enriched in acidic residues. Residues 164–203 (LEPKDIDLVMAQANVSRKKAVKALRENDNDIVNSIMALSI) enclose the UBA domain.

The protein belongs to the NAC-alpha family. Part of the nascent polypeptide-associated complex (NAC), consisting of egd2 and egd1. NAC associates with ribosomes via egd1.

The protein localises to the cytoplasm. It is found in the nucleus. Functionally, component of the nascent polypeptide-associated complex (NAC), a dynamic component of the ribosomal exit tunnel, protecting the emerging polypeptides from interaction with other cytoplasmic proteins to ensure appropriate nascent protein targeting. The NAC complex also promotes mitochondrial protein import by enhancing productive ribosome interactions with the outer mitochondrial membrane and blocks the inappropriate interaction of ribosomes translating non-secretory nascent polypeptides with translocation sites in the membrane of the endoplasmic reticulum. Egd2 may also be involved in transcription regulation. This is Nascent polypeptide-associated complex subunit alpha (egd2) from Emericella nidulans (strain FGSC A4 / ATCC 38163 / CBS 112.46 / NRRL 194 / M139) (Aspergillus nidulans).